The following is a 122-amino-acid chain: Protein NIM1-INTERACTING 2 (122 aa).

Positions 1-22 (MNNSLKKEERVEEDNGKSDGNR) are enriched in basic and acidic residues. Positions 1-28 (MNNSLKKEERVEEDNGKSDGNRGKPSTE) are disordered. Residues 39–45 (DEFFKIL) are involved in NPR1/NIM1 interaction. The Nuclear localization signal signature appears at 70 to 74 (KKRKR).

As to quaternary structure, interacts with NPR1 N-terminal region.

Its subcellular location is the nucleus. This Arabidopsis thaliana (Mouse-ear cress) protein is Protein NIM1-INTERACTING 2.